A 508-amino-acid polypeptide reads, in one-letter code: MNCQQLWLGFLLPMTVSGRVLGLAEVAPVDYLSQYGYLQKPLEGSNNFKPEDITEALRAFQEASELPVSGQLDDATRARMRQPRCGLEDPFNQKTLKYLLLGRWRKKHLTFRILNLPSTLPPHTARAALRQAFQDWSNVAPLTFQEVQAGAADIRLSFHGRQSSYCSNTFDGPGRVLAHADIPELGSVHFDEDEFWTEGTYRGVNLRIIAAHEVGHALGLGHSRYSQALMAPVYEGYRPHFKLHPDDVAGIQALYGKKSPVIRDEEEEETELPTVPPVPTEPSPMPDPCSSELDAMMLGPRGKTYAFKGDYVWTVSDSGPGPLFRVSALWEGLPGNLDAAVYSPRTQWIHFFKGDKVWRYINFKMSPGFPKKLNRVEPNLDAALYWPLNQKVFLFKGSGYWQWDELARTDFSSYPKPIKGLFTGVPNQPSAAMSWQDGRVYFFKGKVYWRLNQQLRVEKGYPRNISHNWMHCRPRTIDTTPSGGNTTPSGTGITLDTTLSATETTFEY.

The signal sequence occupies residues 1-18 (MNCQQLWLGFLLPMTVSG). A propeptide spanning residues 19-97 (RVLGLAEVAP…EDPFNQKTLK (79 aa)) is cleaved from the precursor. The Cysteine switch signature appears at 83-90 (PRCGLEDP). Residues Cys-85 and His-212 each contribute to the Zn(2+) site. Residue Glu-213 is part of the active site. Residues His-216 and His-222 each coordinate Zn(2+). The disordered stretch occupies residues 262-288 (IRDEEEEETELPTVPPVPTEPSPMPDP). Pro residues predominate over residues 274-287 (TVPPVPTEPSPMPD). Hemopexin repeat units follow at residues 286-333 (PDPC…WEGL), 334-380 (PGNL…EPNL), 381-425 (DAAL…FTGV), and 426-472 (PNQP…WMHC). Cys-289 and Cys-472 are oxidised to a cystine. The N-linked (GlcNAc...) asparagine glycan is linked to Asn-464.

The protein belongs to the peptidase M10A family. Requires Zn(2+) as cofactor. Ca(2+) serves as cofactor. Post-translationally, activated by autolytic cleavage after Lys-97. Tyrosine phosphorylated by PKDCC/VLK. In terms of tissue distribution, expressed in mammary gland, placenta, lung, pancreas, ovary, small intestine, spleen, thymus, prostate, testis colon, heart and blood vessel walls. Not detected in brain and peripheral blood leukocytes. Also expressed in the synovial fluid of normal and rheumatoid patients.

The protein localises to the secreted. Its subcellular location is the extracellular space. It is found in the extracellular matrix. With respect to regulation, strongly inhibited by TIMP-2, TIMP-3 and TIMP-4, while TIMP-1 is less efficient. Endopeptidase that degrades various components of the extracellular matrix, such as aggrecan and cartilage oligomeric matrix protein (comp), during development, haemostasis and pathological conditions (arthritic disease). May also play a role in neovascularization or angiogenesis. Hydrolyzes collagen type IV, laminin, nidogen, nascin-C isoform, fibronectin, and type I gelatin. The sequence is that of Matrix metalloproteinase-19 (MMP19) from Homo sapiens (Human).